The primary structure comprises 523 residues: Dynein regulatory complex subunit 3 (523 aa).

LRR repeat units lie at residues 44-65 (DVLS…WQFE), 66-87 (NLRK…ENLA), 88-109 (HLVW…DTLV), 110-131 (NLED…DALV), and 132-153 (KLQV…IYLR). Residues 166 to 204 (NPISEAEDYKMFICAYLPDLMYLDYRRIDDHTKKLAEAK) form the LRRCT domain. 2 coiled-coil regions span residues 208–242 (SIDE…AFVE) and 366–391 (MTLE…VDMV).

Belongs to the DRC3 family. As to quaternary structure, component of the nexin-dynein regulatory complex (N-DRC). Interacts with DRC1. Interacts with TCTE1/DRC5. Interacts with DRC7.

Its subcellular location is the cytoplasm. The protein localises to the cytoskeleton. The protein resides in the cilium axoneme. It is found in the cell projection. It localises to the cilium. Its subcellular location is the flagellum axoneme. The protein localises to the flagellum. Its function is as follows. Component of the nexin-dynein regulatory complex (N-DRC) a key regulator of ciliary/flagellar motility which maintains the alignment and integrity of the distal axoneme and regulates microtubule sliding in motile axonemes. This chain is Dynein regulatory complex subunit 3 (DRC3), found in Homo sapiens (Human).